The primary structure comprises 250 residues: Probable transcriptional regulatory protein Paes_0496 (250 aa).

The protein belongs to the TACO1 family.

Its subcellular location is the cytoplasm. This chain is Probable transcriptional regulatory protein Paes_0496, found in Prosthecochloris aestuarii (strain DSM 271 / SK 413).